Here is a 224-residue protein sequence, read N- to C-terminus: Voltage-dependent calcium channel gamma-1 subunit (224 aa).

The Cytoplasmic portion of the chain corresponds to M1–R10. Residues V11 to T29 traverse the membrane as a helical segment. The Extracellular segment spans residues D30–A110. N43 and N81 each carry an N-linked (GlcNAc...) asparagine glycan. An intrachain disulfide couples C57 to C82. The helical transmembrane segment at A111–F131 threads the bilayer. The Cytoplasmic segment spans residues R132–D136. The helical transmembrane segment at Y137–V157 threads the bilayer. Over E158–G181 the chain is Extracellular. A helical transmembrane segment spans residues W182–L206. Residues P207–H224 lie on the Cytoplasmic side of the membrane.

This sequence belongs to the PMP-22/EMP/MP20 family. CACNG subfamily. In terms of assembly, component of a calcium channel complex consisting of a pore-forming alpha subunit (CACNA1S) and the ancillary subunits CACNB1 or CACNB2, CACNG1 and CACNA2D1. The channel complex contains alpha, beta, gamma and delta subunits in a 1:1:1:1 ratio, i.e. it contains either CACNB1 or CACNB2. Post-translationally, N-glycosylated.

Its subcellular location is the cell membrane. It localises to the sarcolemma. Functionally, regulatory subunit of the voltage-gated calcium channel that gives rise to L-type calcium currents in skeletal muscle. Regulates channel inactivation kinetics. The polypeptide is Voltage-dependent calcium channel gamma-1 subunit (CACNG1) (Sus scrofa (Pig)).